The chain runs to 247 residues: Malonyl-[acyl-carrier protein] O-methyltransferase (247 aa).

Belongs to the methyltransferase superfamily.

The enzyme catalyses malonyl-[ACP] + S-adenosyl-L-methionine = malonyl-[ACP] methyl ester + S-adenosyl-L-homocysteine. It functions in the pathway cofactor biosynthesis; biotin biosynthesis. Functionally, converts the free carboxyl group of a malonyl-thioester to its methyl ester by transfer of a methyl group from S-adenosyl-L-methionine (SAM). It allows to synthesize pimeloyl-ACP via the fatty acid synthetic pathway. This chain is Malonyl-[acyl-carrier protein] O-methyltransferase, found in Buchnera aphidicola subsp. Baizongia pistaciae (strain Bp).